The following is a 1298-amino-acid chain: Phosphoribosylformylglycinamidine synthase (1298 aa).

The tract at residues 303–327 (FPGAATGSGGEIRDEGATGRGAKPK) is disordered. ATP contacts are provided by residues 305–316 (GAATGSGGEIRD), 384–386 (TGY), and Ala-676. Residues Asp-677, Glu-716, Asn-720, and Asp-884 each coordinate Mg(2+). Ser-886 is a binding site for ATP. The Glutamine amidotransferase type-1 domain maps to 1045 to 1298 (VAVLREQGVN…MFRNARAWVN (254 aa)). Cys-1138 (nucleophile) is an active-site residue. Catalysis depends on residues His-1263 and Glu-1265.

In the N-terminal section; belongs to the FGAMS family. Monomer.

The protein resides in the cytoplasm. It catalyses the reaction N(2)-formyl-N(1)-(5-phospho-beta-D-ribosyl)glycinamide + L-glutamine + ATP + H2O = 2-formamido-N(1)-(5-O-phospho-beta-D-ribosyl)acetamidine + L-glutamate + ADP + phosphate + H(+). Its pathway is purine metabolism; IMP biosynthesis via de novo pathway; 5-amino-1-(5-phospho-D-ribosyl)imidazole from N(2)-formyl-N(1)-(5-phospho-D-ribosyl)glycinamide: step 1/2. Phosphoribosylformylglycinamidine synthase involved in the purines biosynthetic pathway. Catalyzes the ATP-dependent conversion of formylglycinamide ribonucleotide (FGAR) and glutamine to yield formylglycinamidine ribonucleotide (FGAM) and glutamate. The sequence is that of Phosphoribosylformylglycinamidine synthase from Pseudomonas savastanoi pv. phaseolicola (strain 1448A / Race 6) (Pseudomonas syringae pv. phaseolicola (strain 1448A / Race 6)).